The following is a 715-amino-acid chain: Polyribonucleotide nucleotidyltransferase (715 aa).

Residues D488 and D494 each contribute to the Mg(2+) site. One can recognise a KH domain in the interval 555 to 614; the sequence is PKIETIKIPVDKIREVIGSGGKVIREIVEKTGAKIDIGEDGTIKIAAAEQTKIDAAKEWI. Residues 624 to 692 enclose the S1 motif domain; that stretch reads GQIYTGKVVK…DRGKTRLSMK (69 aa). A disordered region spans residues 692-715; that stretch reads KVVDQETGEDLSKSNEKAEEPADA. Residues 701 to 715 show a composition bias toward basic and acidic residues; the sequence is DLSKSNEKAEEPADA.

This sequence belongs to the polyribonucleotide nucleotidyltransferase family. The cofactor is Mg(2+).

It localises to the cytoplasm. It catalyses the reaction RNA(n+1) + phosphate = RNA(n) + a ribonucleoside 5'-diphosphate. Involved in mRNA degradation. Catalyzes the phosphorolysis of single-stranded polyribonucleotides processively in the 3'- to 5'-direction. This chain is Polyribonucleotide nucleotidyltransferase, found in Phenylobacterium zucineum (strain HLK1).